We begin with the raw amino-acid sequence, 301 residues long: Probable alpha-L-glutamate ligase (301 aa).

Residues 104-287 (MQLLSRKGIG…VAGLIIDFIE (184 aa)) enclose the ATP-grasp domain. ATP is bound by residues K141, 178 to 179 (EF), D187, and 211 to 213 (RSN). The Mg(2+) site is built by D248, E260, and N262. Mn(2+) is bound by residues D248, E260, and N262.

This sequence belongs to the RimK family. Mg(2+) serves as cofactor. It depends on Mn(2+) as a cofactor.

This chain is Probable alpha-L-glutamate ligase, found in Aliivibrio fischeri (strain MJ11) (Vibrio fischeri).